The following is a 324-amino-acid chain: Beta-ketoacyl-[acyl-carrier-protein] synthase III (324 aa).

Catalysis depends on residues Cys113 and His251. The tract at residues 252–256 is ACP-binding; sequence QANKR. Residue Asn281 is part of the active site.

It belongs to the thiolase-like superfamily. FabH family. As to quaternary structure, homodimer.

Its subcellular location is the cytoplasm. It carries out the reaction malonyl-[ACP] + acetyl-CoA + H(+) = 3-oxobutanoyl-[ACP] + CO2 + CoA. It participates in lipid metabolism; fatty acid biosynthesis. Its function is as follows. Catalyzes the condensation reaction of fatty acid synthesis by the addition to an acyl acceptor of two carbons from malonyl-ACP. Catalyzes the first condensation reaction which initiates fatty acid synthesis and may therefore play a role in governing the total rate of fatty acid production. Possesses both acetoacetyl-ACP synthase and acetyl transacylase activities. Its substrate specificity determines the biosynthesis of branched-chain and/or straight-chain of fatty acids. The sequence is that of Beta-ketoacyl-[acyl-carrier-protein] synthase III from Bartonella bacilliformis (strain ATCC 35685 / KC583 / Herrer 020/F12,63).